The chain runs to 164 residues: Lipoprotein signal peptidase (164 aa).

Transmembrane regions (helical) follow at residues 6-26, 39-59, 65-85, and 88-108; these read LGVLAGIVALVLDQVTKLWLL, VLPFFDLVLAWNTGISYGWFS, GQILMLAFKAVAIVALAIWMA, and TTKLATIGLGLIIGGAIGNAI. Residues aspartate 118 and aspartate 140 contribute to the active site. The helical transmembrane segment at 141 to 161 threads the bilayer; the sequence is VAIVVGVAALLYDSLIGLPAA.

Belongs to the peptidase A8 family.

It is found in the cell inner membrane. The catalysed reaction is Release of signal peptides from bacterial membrane prolipoproteins. Hydrolyzes -Xaa-Yaa-Zaa-|-(S,diacylglyceryl)Cys-, in which Xaa is hydrophobic (preferably Leu), and Yaa (Ala or Ser) and Zaa (Gly or Ala) have small, neutral side chains.. It participates in protein modification; lipoprotein biosynthesis (signal peptide cleavage). Its function is as follows. This protein specifically catalyzes the removal of signal peptides from prolipoproteins. In Rhodopseudomonas palustris (strain ATCC BAA-98 / CGA009), this protein is Lipoprotein signal peptidase.